The following is a 181-amino-acid chain: Putative NAD(P)H-dependent FMN-containing oxidoreductase YwqN (181 aa).

This sequence belongs to the SsuE family. FMN is required as a cofactor.

Its function is as follows. Putative NADPH-dependent oxidoreductase. The polypeptide is Putative NAD(P)H-dependent FMN-containing oxidoreductase YwqN (ywqN) (Bacillus subtilis (strain 168)).